We begin with the raw amino-acid sequence, 168 residues long: Large ribosomal subunit protein uL10 (168 aa).

Belongs to the universal ribosomal protein uL10 family. Part of the ribosomal stalk of the 50S ribosomal subunit. The N-terminus interacts with L11 and the large rRNA to form the base of the stalk. The C-terminus forms an elongated spine to which L12 dimers bind in a sequential fashion forming a multimeric L10(L12)X complex.

Its function is as follows. Forms part of the ribosomal stalk, playing a central role in the interaction of the ribosome with GTP-bound translation factors. The protein is Large ribosomal subunit protein uL10 of Ralstonia nicotianae (strain ATCC BAA-1114 / GMI1000) (Ralstonia solanacearum).